The primary structure comprises 341 residues: Methionine import ATP-binding protein MetN 1 (341 aa).

Residues 2–241 enclose the ABC transporter domain; that stretch reads IEFRQVSKTF…PKTTIAQNFV (240 aa). 38 to 45 is an ATP binding site; it reads GYSGAGKS.

The protein belongs to the ABC transporter superfamily. Methionine importer (TC 3.A.1.24) family. In terms of assembly, the complex is composed of two ATP-binding proteins (MetN), two transmembrane proteins (MetI) and a solute-binding protein (MetQ).

The protein resides in the cell membrane. It catalyses the reaction L-methionine(out) + ATP + H2O = L-methionine(in) + ADP + phosphate + H(+). It carries out the reaction D-methionine(out) + ATP + H2O = D-methionine(in) + ADP + phosphate + H(+). Part of the ABC transporter complex MetNIQ involved in methionine import. Responsible for energy coupling to the transport system. The sequence is that of Methionine import ATP-binding protein MetN 1 from Staphylococcus aureus (strain MW2).